We begin with the raw amino-acid sequence, 82 residues long: Toxin TdNa6 (82 aa).

Residues 1 to 20 (MKGMIMLISCLMLIEVVVGG) form the signal peptide. The 62-residue stretch at 21 to 82 (KEGYLLDRSN…KMWHLKTNKC (62 aa)) folds into the LCN-type CS-alpha/beta domain. Cystine bridges form between C32–C82, C36–C58, C44–C63, and C48–C65.

This sequence belongs to the long (4 C-C) scorpion toxin superfamily. Sodium channel inhibitor family. Beta subfamily. In terms of tissue distribution, expressed by the venom gland.

Its subcellular location is the secreted. Its function is as follows. Beta toxins bind voltage-independently at site-4 of sodium channels (Nav) and shift the voltage of activation toward more negative potentials thereby affecting sodium channel activation and promoting spontaneous and repetitive firing. Is toxic to arthropods. In Tityus discrepans (Venezuelan scorpion), this protein is Toxin TdNa6.